The sequence spans 79 residues: MKNKAVLMLMALFLVAVTQVHGDPEPSYKARSCTAYGYFCMIPPRCRGTVVANHWCRARGHICCSSPSNVYGKNQLLAA.

Positions 1–22 (MKNKAVLMLMALFLVAVTQVHG) are cleaved as a signal peptide. The propeptide occupies 23 to 26 (DPEP). Disulfide bonds link C33–C63, C40–C56, and C46–C64. A propeptide spanning residues 75-79 (QLLAA) is cleaved from the precursor.

As to quaternary structure, monomer. Post-translationally, contains 3 disulfide bonds. Expressed in hemocytes (at protein level).

Functionally, involved in the melanization cascade in response to lipopolysaccharide (LPS). In vitro, reversibly and competitively inhibits trypsin (Ki=8.6 nM) but not serine proteases chymotrypsin, elastase, subtilisin, thrombin and plasmin, cysteine peptidase papain or metallopeptidase carboxypeptidase A. The chain is Panulirin from Panulirus argus (Caribbean spiny lobster).